Consider the following 270-residue polypeptide: Electron transfer flavoprotein subunit beta (270 aa).

This sequence belongs to the ETF alpha-subunit/FixB family. In terms of assembly, heterodimer of an alpha and a beta subunit. It depends on FAD as a cofactor.

Functionally, the electron transfer flavoprotein serves as a specific electron acceptor for other dehydrogenases. It transfers the electrons to the main respiratory chain via ETF-ubiquinone oxidoreductase (ETF dehydrogenase). The chain is Electron transfer flavoprotein subunit beta (etfB) from Megasphaera elsdenii.